A 181-amino-acid polypeptide reads, in one-letter code: MEARRHSALKDSVRSIPDYPKPGIIFRDITTLLSDPRSFRRAVDSLVHPYAGGRIDQVAGIEARGFILGGAVAHQLSSGFVPIRKKGKLPHKTVSTAYALEYGTDEIEIHVDAIKPGDRVILVDDLIATGGTATAAVNLLRQLGAEVVAACFVIDLPEIGGAQRLRDLGVTVRTLMEFEGH.

Belongs to the purine/pyrimidine phosphoribosyltransferase family. In terms of assembly, homodimer.

It localises to the cytoplasm. It catalyses the reaction AMP + diphosphate = 5-phospho-alpha-D-ribose 1-diphosphate + adenine. The protein operates within purine metabolism; AMP biosynthesis via salvage pathway; AMP from adenine: step 1/1. Its function is as follows. Catalyzes a salvage reaction resulting in the formation of AMP, that is energically less costly than de novo synthesis. The sequence is that of Adenine phosphoribosyltransferase from Methylorubrum extorquens (strain CM4 / NCIMB 13688) (Methylobacterium extorquens).